We begin with the raw amino-acid sequence, 495 residues long: Cytoplasmic alpha-amylase (495 aa).

Ca(2+) contacts are provided by N104 and D198. The active-site Nucleophile is the D235. H239 contributes to the Ca(2+) binding site. The active-site Proton donor is E265.

This sequence belongs to the glycosyl hydrolase 13 family. Monomer. It depends on Ca(2+) as a cofactor.

The protein localises to the cytoplasm. It catalyses the reaction Endohydrolysis of (1-&gt;4)-alpha-D-glucosidic linkages in polysaccharides containing three or more (1-&gt;4)-alpha-linked D-glucose units.. This chain is Cytoplasmic alpha-amylase (amyA), found in Escherichia coli (strain K12).